The chain runs to 325 residues: 1-aminocyclopropane-1-carboxylate oxidase 2 (325 aa).

In terms of domain architecture, Fe2OG dioxygenase spans 157–257 (PTFGTKVSNY…RMSIASFYNP (101 aa)). Fe cation-binding residues include His181, Asp183, and His238.

This sequence belongs to the iron/ascorbate-dependent oxidoreductase family. Requires Fe cation as cofactor.

It carries out the reaction 1-aminocyclopropane-1-carboxylate + L-ascorbate + O2 = ethene + L-dehydroascorbate + hydrogen cyanide + CO2 + 2 H2O. It functions in the pathway alkene biosynthesis; ethylene biosynthesis via S-adenosyl-L-methionine; ethylene from S-adenosyl-L-methionine: step 2/2. This is 1-aminocyclopropane-1-carboxylate oxidase 2 (ACO2) from Doritaenopsis sp. (Moth orchid).